The chain runs to 128 residues: uncharacterized protein (128 aa).

This is an uncharacterized protein from Frog virus 3 (isolate Goorha) (FV-3).